The chain runs to 326 residues: Cytosolic Fe-S cluster assembly factor NBP35 (326 aa).

The segment at 1 to 38 is disordered; that stretch reads MTEIANGQQILPPDYTLKEPEPEHCPGPESENAGKGDS. Residues 16-26 show a composition bias toward basic and acidic residues; it reads TLKEPEPEHCP. Residues cysteine 25, cysteine 39, cysteine 42, and cysteine 48 each coordinate [4Fe-4S] cluster. Position 78–85 (78–85) interacts with ATP; sequence GKGGVGKS. Residues cysteine 251 and cysteine 254 each coordinate [4Fe-4S] cluster.

The protein belongs to the Mrp/NBP35 ATP-binding proteins family. NUBP1/NBP35 subfamily. As to quaternary structure, heterotetramer of 2 NBP35 and 2 CFD1 chains. [4Fe-4S] cluster serves as cofactor.

The protein localises to the cytoplasm. It localises to the nucleus. Component of the cytosolic iron-sulfur (Fe/S) protein assembly (CIA) machinery. Required for maturation of extramitochondrial Fe-S proteins. The NBP35-CFD1 heterotetramer forms a Fe-S scaffold complex, mediating the de novo assembly of an Fe-S cluster and its transfer to target apoproteins. Required for biogenesis and export of both ribosomal subunits, which may reflect a role in assembly of the Fe/S clusters in RLI1, a protein which performs rRNA processing and ribosome export. This is Cytosolic Fe-S cluster assembly factor NBP35 from Kluyveromyces lactis (strain ATCC 8585 / CBS 2359 / DSM 70799 / NBRC 1267 / NRRL Y-1140 / WM37) (Yeast).